Reading from the N-terminus, the 166-residue chain is Large ribosomal subunit protein uL10 (166 aa).

This sequence belongs to the universal ribosomal protein uL10 family. In terms of assembly, part of the ribosomal stalk of the 50S ribosomal subunit. The N-terminus interacts with L11 and the large rRNA to form the base of the stalk. The C-terminus forms an elongated spine to which L12 dimers bind in a sequential fashion forming a multimeric L10(L12)X complex.

Forms part of the ribosomal stalk, playing a central role in the interaction of the ribosome with GTP-bound translation factors. This is Large ribosomal subunit protein uL10 from Listeria innocua serovar 6a (strain ATCC BAA-680 / CLIP 11262).